A 361-amino-acid chain; its full sequence is Probable dual-specificity RNA methyltransferase RlmN (361 aa).

Glu91 functions as the Proton acceptor in the catalytic mechanism. One can recognise a Radical SAM core domain in the interval 97–329; it reads QHYGLSVCVT…KKKGGNCVVR (233 aa). A disulfide bridge connects residues Cys104 and Cys340. Cys111, Cys115, and Cys118 together coordinate [4Fe-4S] cluster. S-adenosyl-L-methionine-binding positions include 163 to 164, Ser195, 218 to 220, and Asn296; these read GE and SLH. Catalysis depends on Cys340, which acts as the S-methylcysteine intermediate.

The protein belongs to the radical SAM superfamily. RlmN family. It depends on [4Fe-4S] cluster as a cofactor.

The protein localises to the cytoplasm. The catalysed reaction is adenosine(2503) in 23S rRNA + 2 reduced [2Fe-2S]-[ferredoxin] + 2 S-adenosyl-L-methionine = 2-methyladenosine(2503) in 23S rRNA + 5'-deoxyadenosine + L-methionine + 2 oxidized [2Fe-2S]-[ferredoxin] + S-adenosyl-L-homocysteine. It catalyses the reaction adenosine(37) in tRNA + 2 reduced [2Fe-2S]-[ferredoxin] + 2 S-adenosyl-L-methionine = 2-methyladenosine(37) in tRNA + 5'-deoxyadenosine + L-methionine + 2 oxidized [2Fe-2S]-[ferredoxin] + S-adenosyl-L-homocysteine. Functionally, specifically methylates position 2 of adenine 2503 in 23S rRNA and position 2 of adenine 37 in tRNAs. This chain is Probable dual-specificity RNA methyltransferase RlmN, found in Streptococcus pneumoniae (strain P1031).